Here is a 181-residue protein sequence, read N- to C-terminus: Histone deacetylase complex subunit SAP30L-A (181 aa).

Intrachain disulfides connect C26/C27 and C35/C71. Residues C26–H74 form an Atypical zinc finger. The segment at R82 to I103 is disordered. The short motif at N83 to K88 is the Nuclear localization signal (NLS) element. The segment at R85–R87 is important for DNA and phosphoinositide binding.

Belongs to the SAP30 family. As to quaternary structure, interacts with components of the histone deacetylase complex sin3a, hdac1 and hdac2. Binds histones and nucleosomes.

It is found in the nucleus. The protein resides in the nucleolus. Functionally, functions as a transcription repressor, probably via its interaction with histone deacetylase complexes. Involved in the functional recruitment of the class 1 Sin3-histone deacetylase complex (HDAC) to the nucleolus. Binds DNA, apparently without sequence-specificity, and bends bound double-stranded DNA. Binds phosphoinositol phosphates (phosphoinositol 3-phosphate, phosphoinositol 4-phosphate and phosphoinositol 5-phosphate) via the same basic sequence motif that mediates DNA binding and nuclear import. The chain is Histone deacetylase complex subunit SAP30L-A (sap30l-a) from Xenopus laevis (African clawed frog).